Consider the following 367-residue polypeptide: Putrescine-binding periplasmic protein SpuD (367 aa).

Residues 1–24 form the signal peptide; that stretch reads MMKRFGKTLLALTLAGSVAGMAQA. A putrescine-binding site is contributed by 36 to 37; sequence SD. Cys173 and Cys236 are disulfide-bonded. 2 residues coordinate putrescine: Asp244 and Asp275.

This sequence belongs to the bacterial solute-binding protein PotD/PotF family.

Its subcellular location is the periplasm. The protein localises to the secreted. Its function is as follows. Putrescine-binding protein probably required for putrescine uptake into cells. Binds putrescine with high affinity, spermidine with relatively low affinity. Does not bind cadaverine or spermine. Putrescine binding induces large inter-domain conformational changes. This chain is Putrescine-binding periplasmic protein SpuD (spuD), found in Pseudomonas aeruginosa (strain UCBPP-PA14).